The chain runs to 273 residues: Peptide deformylase 1B, chloroplastic/mitochondrial (273 aa).

The transit peptide at 1-56 (MAVCNCFLQAPPLSRILLPVLSRRATTLSAGYGRLKSTVTFCSTVNRTSPLTSSVR) directs the protein to the chloroplast and mitochondrion. Residues Cys-171 and His-213 each contribute to the Fe cation site. Glu-214 is an active-site residue. Position 217 (His-217) interacts with Fe cation. Residues 246-261 (YEEKTGLPSPERVEAR) show a composition bias toward basic and acidic residues. The tract at residues 246–273 (YEEKTGLPSPERVEARQKRKAGVGFGKR) is disordered. Positions 262 to 273 (QKRKAGVGFGKR) are enriched in basic residues.

Belongs to the polypeptide deformylase family. Homodimer. Fe(2+) serves as cofactor. Expressed in leaves and flowers.

The protein localises to the plastid. The protein resides in the chloroplast stroma. Its subcellular location is the mitochondrion. It carries out the reaction N-terminal N-formyl-L-methionyl-[peptide] + H2O = N-terminal L-methionyl-[peptide] + formate. With respect to regulation, inhibited by actinonin. Removes the formyl group from the N-terminal Met of newly synthesized proteins. Has a preferred substrate specificity towards the photosystem II (PS II) D1 polypeptide. This chain is Peptide deformylase 1B, chloroplastic/mitochondrial (PDF1B), found in Arabidopsis thaliana (Mouse-ear cress).